A 507-amino-acid polypeptide reads, in one-letter code: Probable lipid II flippase MurJ (507 aa).

13 helical membrane passes run 3–23 (LFRSGIILAFLTFIARIFGLV), 54–74 (IFAEGALSSVFIPIYNEKMLI), 92–112 (LTLIVIIALMQIFMPQLILCI), 132–152 (ITIPYLIFVSLTALLGGILNS), 156–176 (FAAFAFSPIILSVCVIIFTLI), 185–205 (ISISVSLIIAGILQVVFMFIC), 268–288 (IYQFPLSIIGTSFSTILLPEM), 310–330 (IGLLLSLPATFGIIILSHPIT), 351–371 (ISAFALGLPAFILAKILTPIF), 379–399 (TPLKITLFSIIINTNMNLLLM), 405–425 (IGIAVGTSIAAWYNLGLLYSY), 438–458 (IKLFCAKILLCCTLMSIIIAL), and 472–492 (LLIKVSMLGSTIIIGVAIFFG).

The protein belongs to the MurJ/MviN family.

It is found in the cell inner membrane. It participates in cell wall biogenesis; peptidoglycan biosynthesis. Functionally, involved in peptidoglycan biosynthesis. Transports lipid-linked peptidoglycan precursors from the inner to the outer leaflet of the cytoplasmic membrane. The sequence is that of Probable lipid II flippase MurJ from Rickettsia prowazekii (strain Madrid E).